Consider the following 557-residue polypeptide: Arginine--tRNA ligase (557 aa).

A 'HIGH' region motif is present at residues 132–142 (ANPTGNLHLGH).

Belongs to the class-I aminoacyl-tRNA synthetase family. As to quaternary structure, monomer.

It is found in the cytoplasm. The enzyme catalyses tRNA(Arg) + L-arginine + ATP = L-arginyl-tRNA(Arg) + AMP + diphosphate. The polypeptide is Arginine--tRNA ligase (Geobacillus thermodenitrificans (strain NG80-2)).